The chain runs to 653 residues: tRNA 5-methylaminomethyl-2-thiouridine biosynthesis bifunctional protein MnmC (653 aa).

Positions 1–233 (MKTAPITPGR…KRDITVARFT (233 aa)) are tRNA (mnm(5)s(2)U34)-methyltransferase. The tract at residues 258–653 (IGAGLAGCAA…YALPRWRSDS (396 aa)) is FAD-dependent cmnm(5)s(2)U34 oxidoreductase.

The protein in the N-terminal section; belongs to the methyltransferase superfamily. tRNA (mnm(5)s(2)U34)-methyltransferase family. It in the C-terminal section; belongs to the DAO family. FAD serves as cofactor.

It is found in the cytoplasm. It catalyses the reaction 5-aminomethyl-2-thiouridine(34) in tRNA + S-adenosyl-L-methionine = 5-methylaminomethyl-2-thiouridine(34) in tRNA + S-adenosyl-L-homocysteine + H(+). In terms of biological role, catalyzes the last two steps in the biosynthesis of 5-methylaminomethyl-2-thiouridine (mnm(5)s(2)U) at the wobble position (U34) in tRNA. Catalyzes the FAD-dependent demodification of cmnm(5)s(2)U34 to nm(5)s(2)U34, followed by the transfer of a methyl group from S-adenosyl-L-methionine to nm(5)s(2)U34, to form mnm(5)s(2)U34. In Methylibium petroleiphilum (strain ATCC BAA-1232 / LMG 22953 / PM1), this protein is tRNA 5-methylaminomethyl-2-thiouridine biosynthesis bifunctional protein MnmC.